The chain runs to 547 residues: Glucose-6-phosphate isomerase (547 aa).

The active-site Proton donor is the Glu-351. Residues His-382 and Lys-509 contribute to the active site.

This sequence belongs to the GPI family.

Its subcellular location is the cytoplasm. It carries out the reaction alpha-D-glucose 6-phosphate = beta-D-fructose 6-phosphate. It participates in carbohydrate biosynthesis; gluconeogenesis. The protein operates within carbohydrate degradation; glycolysis; D-glyceraldehyde 3-phosphate and glycerone phosphate from D-glucose: step 2/4. Catalyzes the reversible isomerization of glucose-6-phosphate to fructose-6-phosphate. The protein is Glucose-6-phosphate isomerase of Coxiella burnetii (strain CbuG_Q212) (Coxiella burnetii (strain Q212)).